The primary structure comprises 196 residues: Probable GTP-binding protein EngB (196 aa).

Residues 22-195 (KLPEVALAGR…WNWIESITKV (174 aa)) enclose the EngB-type G domain. GTP is bound by residues 30–37 (GRSNVGKS), 57–61 (GKTQT), 75–78 (DVPG), 142–145 (TKID), and 174–176 (FSA). The Mg(2+) site is built by Ser-37 and Thr-59.

The protein belongs to the TRAFAC class TrmE-Era-EngA-EngB-Septin-like GTPase superfamily. EngB GTPase family. Mg(2+) is required as a cofactor.

Necessary for normal cell division and for the maintenance of normal septation. The chain is Probable GTP-binding protein EngB from Ligilactobacillus salivarius (strain UCC118) (Lactobacillus salivarius).